Here is a 121-residue protein sequence, read N- to C-terminus: Nitrogenase-stabilizing/protective protein NifW (121 aa).

Belongs to the NifW family. In terms of assembly, homotrimer; associates with NifD.

May protect the nitrogenase Fe-Mo protein from oxidative damage. The chain is Nitrogenase-stabilizing/protective protein NifW from Synechococcus sp. (strain JA-2-3B'a(2-13)) (Cyanobacteria bacterium Yellowstone B-Prime).